The primary structure comprises 231 residues: Acyl-protein thioesterase 1 (231 aa).

Catalysis depends on charge relay system residues serine 121, aspartate 178, and histidine 211.

It belongs to the AB hydrolase superfamily. AB hydrolase 2 family.

The protein localises to the cytoplasm. The protein resides in the nucleus. It catalyses the reaction S-hexadecanoyl-L-cysteinyl-[protein] + H2O = L-cysteinyl-[protein] + hexadecanoate + H(+). Hydrolyzes fatty acids from S-acylated cysteine residues in proteins with a strong preference for palmitoylated G-alpha proteins over other acyl substrates. Mediates the deacylation of G-alpha proteins such as GPA1 in vivo, but has weak or no activity toward palmitoylated Ras proteins. Has weak lysophospholipase activity in vitro; however such activity may not exist in vivo. The polypeptide is Acyl-protein thioesterase 1 (Candida albicans (strain SC5314 / ATCC MYA-2876) (Yeast)).